Reading from the N-terminus, the 287-residue chain is ATP synthase gamma chain (287 aa).

This sequence belongs to the ATPase gamma chain family. F-type ATPases have 2 components, CF(1) - the catalytic core - and CF(0) - the membrane proton channel. CF(1) has five subunits: alpha(3), beta(3), gamma(1), delta(1), epsilon(1). CF(0) has three main subunits: a, b and c.

Its subcellular location is the cell membrane. Produces ATP from ADP in the presence of a proton gradient across the membrane. The gamma chain is believed to be important in regulating ATPase activity and the flow of protons through the CF(0) complex. The sequence is that of ATP synthase gamma chain from Halothermothrix orenii (strain H 168 / OCM 544 / DSM 9562).